A 162-amino-acid chain; its full sequence is Ubiquitin D (162 aa).

Ubiquitin-like domains are found at residues 3-78 (SVRT…LKVV) and 87-160 (LFLV…THCT).

It belongs to the ubiquitin D family. As to quaternary structure, interacts directly with the 26S proteasome. Interacts with NUB1; this interaction facilitates the linking of UBD-conjugated target protein to the proteasome complex and accelerates its own degradation and that of its conjugates. Interacts (via ubiquitin-like 1 domain) with the spindle checkpoint protein MAD2L1 during mitosis. Present in aggresomes of proteasome inhibited cells. Interacts with HDAC6 under proteasome impairment conditions. Forms a thioester with UBA6 in cells stimulated with tumor necrosis factor-alpha (TNFa) and interferon-gamma (IFNg). Interacts with SQSTM1 and TP53/p53. Post-translationally, can be acetylated. In terms of tissue distribution, mostly expressed in thymus and intestine.

It is found in the nucleus. The protein localises to the cytoplasm. Ubiquitin-like protein modifier which can be covalently attached to target proteins and subsequently leads to their degradation by the 26S proteasome, in a NUB1-dependent manner. Conjugation to the target protein is activated by UBA6 via adenylation of its C-terminal glycine. Probably functions as a survival factor. Promotes the expression of the proteasome subunit beta type-9 (PSMB9/LMP2). Regulates TNF-alpha-induced and LPS-mediated activation of the central mediator of innate immunity NF-kappa-B by promoting TNF-alpha-mediated proteasomal degradation of ubiquitinated-I-kappa-B-alpha. Required for TNF-alpha-induced p65 nuclear translocation in renal tubular epithelial cells (RTECs). May be involved in dendritic cell (DC) maturation, the process by which immature dendritic cells differentiate into fully competent antigen-presenting cells that initiate T-cell responses. Mediates mitotic non-disjunction and chromosome instability, in long-term in vitro culture and cancers, by abbreviating mitotic phase and impairing the kinetochore localization of MAD2L1 during the prometaphase stage of the cell cycle. May be involved in the formation of aggresomes when proteasome is saturated or impaired. Mediates apoptosis in a caspase-dependent manner, especially in renal epithelium and tubular cells during renal diseases. The polypeptide is Ubiquitin D (Ubd) (Mus musculus (Mouse)).